Consider the following 324-residue polypeptide: MFTTALAQRENTQLGELPLDLFAAIQSLKKELNAVILAHYYQEPDIQDIADFIGDSLQLARAAEKTNADVIVFAGVHFMAETAKILNPDKLVLLPDLNAGCSLADSCPPEAFAAFKAAHPDHLVVSYINCSADIKAMSDIICTSSNAVKIVQQIPKEQPIIFAPDRNLGRYVMEQTGRDLVLWQGSCVVHETFSEKKIVQLKIAHPEAEAIAHPECESSVLRHASFIGSTAALLKYCQNSPTKEFIVATEPGIIHQMQKLAPDKHFIPAPPMNNCACNECPFMRLNTLEKLYWAMKNRTPEITMLEDIRLAALRPMQRMLEMSV.

Iminosuccinate is bound by residues His-39 and Ser-56. Residue Cys-101 coordinates [4Fe-4S] cluster. Iminosuccinate is bound by residues 127–129 (YIN) and Ser-144. Cys-187 contacts [4Fe-4S] cluster. Residues 213-215 (HPE) and Thr-230 contribute to the iminosuccinate site. Cys-280 is a [4Fe-4S] cluster binding site.

The protein belongs to the quinolinate synthase family. Type 2 subfamily. Requires [4Fe-4S] cluster as cofactor.

The protein resides in the cytoplasm. It catalyses the reaction iminosuccinate + dihydroxyacetone phosphate = quinolinate + phosphate + 2 H2O + H(+). The protein operates within cofactor biosynthesis; NAD(+) biosynthesis; quinolinate from iminoaspartate: step 1/1. Catalyzes the condensation of iminoaspartate with dihydroxyacetone phosphate to form quinolinate. The protein is Quinolinate synthase of Nostoc punctiforme (strain ATCC 29133 / PCC 73102).